The following is a 213-amino-acid chain: Pyridoxine/pyridoxamine 5'-phosphate oxidase (213 aa).

Residues 8 to 11 (RREY) and Lys-66 each bind substrate. Residues 61 to 66 (RIVLLK), 76 to 77 (YT), Arg-82, Lys-83, and Gln-105 contribute to the FMN site. Substrate is bound by residues Tyr-123, Arg-127, and Ser-131. FMN-binding positions include 140-141 (QS) and Trp-185. 191–193 (RLH) contributes to the substrate binding site. Arg-195 contacts FMN.

This sequence belongs to the pyridoxamine 5'-phosphate oxidase family. In terms of assembly, homodimer. FMN is required as a cofactor.

The catalysed reaction is pyridoxamine 5'-phosphate + O2 + H2O = pyridoxal 5'-phosphate + H2O2 + NH4(+). The enzyme catalyses pyridoxine 5'-phosphate + O2 = pyridoxal 5'-phosphate + H2O2. The protein operates within cofactor metabolism; pyridoxal 5'-phosphate salvage; pyridoxal 5'-phosphate from pyridoxamine 5'-phosphate: step 1/1. Its pathway is cofactor metabolism; pyridoxal 5'-phosphate salvage; pyridoxal 5'-phosphate from pyridoxine 5'-phosphate: step 1/1. In terms of biological role, catalyzes the oxidation of either pyridoxine 5'-phosphate (PNP) or pyridoxamine 5'-phosphate (PMP) into pyridoxal 5'-phosphate (PLP). This is Pyridoxine/pyridoxamine 5'-phosphate oxidase from Pseudoalteromonas atlantica (strain T6c / ATCC BAA-1087).